Consider the following 180-residue polypeptide: UPF0149 protein XCV3523 (180 aa).

This sequence belongs to the UPF0149 family.

The chain is UPF0149 protein XCV3523 from Xanthomonas euvesicatoria pv. vesicatoria (strain 85-10) (Xanthomonas campestris pv. vesicatoria).